Reading from the N-terminus, the 99-residue chain is METLSFEFPAGQPARQRAQVGCVGSGDLEVLLEPGPAGRLNIQVVTSVNGSAERWRHLFERMFAGAEPPALNVDIHDFGATPGVVRLRLEQALEEVSNV.

The residue at position 25 (S25) is an O-(phosphoribosyl dephospho-coenzyme A)serine.

Belongs to the MdcC family. Post-translationally, covalently binds the prosthetic group of malonate decarboxylase.

It is found in the cytoplasm. In terms of biological role, subunit of malonate decarboxylase, it is an acyl carrier protein to which acetyl and malonyl thioester residues are bound via a 2'-(5''-phosphoribosyl)-3'-dephospho-CoA prosthetic group and turn over during the catalytic mechanism. The polypeptide is Malonate decarboxylase acyl carrier protein (Azotobacter vinelandii (strain DJ / ATCC BAA-1303)).